Reading from the N-terminus, the 317-residue chain is Transaldolase (317 aa).

The Schiff-base intermediate with substrate role is filled by Lys-131.

This sequence belongs to the transaldolase family. Type 1 subfamily. In terms of assembly, homodimer.

Its subcellular location is the cytoplasm. It carries out the reaction D-sedoheptulose 7-phosphate + D-glyceraldehyde 3-phosphate = D-erythrose 4-phosphate + beta-D-fructose 6-phosphate. It participates in carbohydrate degradation; pentose phosphate pathway; D-glyceraldehyde 3-phosphate and beta-D-fructose 6-phosphate from D-ribose 5-phosphate and D-xylulose 5-phosphate (non-oxidative stage): step 2/3. Its function is as follows. Transaldolase is important for the balance of metabolites in the pentose-phosphate pathway. The protein is Transaldolase of Baumannia cicadellinicola subsp. Homalodisca coagulata.